Here is a 57-residue protein sequence, read N- to C-terminus: uncharacterized protein (57 aa).

In terms of biological role, proetin of unknown function whose overexpression causes growth inhibition. Overexpression increases the expression of ergosterol synthesis genes. This is an uncharacterized protein from Saccharomyces cerevisiae (strain ATCC 204508 / S288c) (Baker's yeast).